The sequence spans 275 residues: Orotidine 5'-phosphate decarboxylase (275 aa).

The active-site Proton donor is K101.

This sequence belongs to the OMP decarboxylase family. Type 2 subfamily.

It carries out the reaction orotidine 5'-phosphate + H(+) = UMP + CO2. The protein operates within pyrimidine metabolism; UMP biosynthesis via de novo pathway; UMP from orotate: step 2/2. This Leptospira interrogans serogroup Icterohaemorrhagiae serovar Lai (strain 56601) protein is Orotidine 5'-phosphate decarboxylase.